Here is a 354-residue protein sequence, read N- to C-terminus: Interferon-inducible protein AIM2 (354 aa).

A Pyrin domain is found at 1–87 (MESEYREMLL…ANALEEKKKE (87 aa)). The segment at 95 to 124 (NTKKRGTQKVENRSQAENCSAASATRSDND) is disordered. Residues 109 to 120 (QAENCSAASATR) are compositionally biased toward polar residues. In terms of domain architecture, HIN-200 spans 144-341 (MVAEQEAIRE…SGPCSFFKVI (198 aa)).

Belongs to the HIN-200 family. Self-associates; forms homooligomers in response to cytosolic double-stranded DNA (dsDNA) and the dsDNA seems to serve as oligomerization platform. Component of AIM2 inflammasome, which consists of a signal sensor component (AIM2), an adapter (PYCARD/ASC), which recruits an effector pro-inflammatory caspase (CASP1). Interacts (via pyrin domain) with PYCARD/ASC (via pyrin domain); interaction is direct. Component of the AIM2 PANoptosome complex, a multiprotein complex that drives inflammatory cell death (PANoptosis). Interacts with EIF2AK2/PKR. Interacts with MAPRE1. Interacts (via HIN-200 domain) with IFI202 (via HIN-200 domain 2); preventing activation of the AIM2 inflammasome. Interacts with RACK1; promoting association with PP2A phosphatase and dephosphorylation of AKT1. Interacts with TRIM11; promoting AIM2 recruitment to autophagosomes and autophagy-dependent degradation. Degraded via selective autophagy following interaction with TRIM11. Expressed in developing neurons. Highly expressed in regulatory T-cells (Treg).

The protein localises to the cytoplasm. It localises to the inflammasome. It is found in the nucleus. Its activity is regulated as follows. Inactive in absence of double-stranded DNA (dsDNA). Homooligomerizes upon binding to dsDNA, dsDNA serving as an oligomerization platform. AIM2 requires large dsDNA to generate a structural template that couples dsDNA ligand-binding and homooligomerization. Homooligomerization is followed by recruitment of PYCARD/ASC to initiate speck formation (nucleation). AIM2 and PYCARD/ASC homooligomer filaments assemble bidirectionally and the recognition between AIM2 and PYCARD/ASC oligomers occurs in a head-to-tail manner. Clustered PYCARD/ASC nucleates the formation of CASP1 filaments through the interaction of their respective CARD domains, acting as a platform for CASP1 polymerization and activation. Active CASP1 then specifically processes protein precursors, such as gasdermin-D (GSDMD), IL1B and IL18, leading to the release of mature cytokines in the extracellular milieu or pyroptosis, depending on cell type. AIM2 can be activated in response to events that cause genomic DNA (HIV protease inhibitor nelfinavir) or mitochondrial DNA release in the cytoplasm (such as Perfluoroalkyl substance pollutants or cholesterol overload). Activation of the AIM2 inflammasome is inhibited by IFI202. Activation of the AIM2 inflammasome is inhibited by TRIM11, which promotes autophagy-dependent degradation of AIM2. Sensor component of the AIM2 inflammasome, which mediates inflammasome activation in response to the presence of double-stranded DNA (dsDNA) in the cytosol, leading to subsequent pyroptosis. Inflammasomes are supramolecular complexes that assemble in the cytosol in response to pathogens and other damage-associated signals and play critical roles in innate immunity and inflammation. Acts as a recognition receptor (PRR): specifically recognizes and binds dsDNA in the cytosol, and mediates the formation of the inflammasome polymeric complex composed of AIM2, CASP1 and PYCARD/ASC. Recruitment of pro-caspase-1 (proCASP1) to the AIM2 inflammasome promotes caspase-1 (CASP1) activation, which subsequently cleaves and activates inflammatory cytokines IL1B and IL18 and gasdermin-D (GSDMD), promoting cytokine secretion. In some cells, CASP1 activation mediates cleavage and activation of GSDMD, triggering pyroptosis without promoting cytokine secretion. Detects cytosolic dsDNA of viral and bacterial origin in a non-sequence-specific manner. Involved in the DNA damage response caused by acute ionizing radiation by mediating pyroptosis of intestinal epithelial cells and bone marrow cells in response to double-strand DNA breaks. Mechanistically, AIM2 senses DNA damage in the nucleus to mediate inflammasome assembly and inflammatory cell death. Also acts as a regulator of neurodevelopment via its role in the DNA damage response: acts by promoting neural cell death in response to DNA damage in the developing brain, thereby purging genetically compromised cells of the central nervous system. Pyroptosis mediated by the AIM2 inflammasome in response to DNA damage is dependent on GSDMD without involving IL1B and IL18 cytokine secretion. Also acts as a mediator of pyroptosis, necroptosis and apoptosis (PANoptosis), an integral part of host defense against pathogens, in response to bacterial infection. Can also trigger PYCARD/ASC-dependent, caspase-1-independent cell death that involves caspase-8 (CASP8). Its function is as follows. Also acts as a tumor suppressor independently of its role in inflammatory response. Able to suppress overt cell proliferation in enterocytes: restricts stem cell proliferation in the intestinal mucosa in an inflammasome-independent manner, contributing to a decrease in the likelihood of colorectal cancer development. AIM2 suppresses cell proliferation by inhibiting phosphorylation of AKT1 at 'Ser-473', preventing AKT1 activation and AKT-mTOR signaling pathway. Inhibits AKT1 phosphorylation both by inhibiting the activity of PRKDC/DNA-PK kinase and promoting dephosphorylation by PP2A phosphatase. Also acts as a key regulator of regulatory T-cells (Treg) homeostasis by promoting their stability: acts by preventing AKT1 activation. Its role in Treg homeostasis is important to restain autoimmune diseases. The chain is Interferon-inducible protein AIM2 from Mus musculus (Mouse).